The following is a 507-amino-acid chain: Chromosomal replication initiator protein DnaA (507 aa).

The domain I, interacts with DnaA modulators stretch occupies residues 1-112 (MTDDPGSGFT…PATDEADDTT (112 aa)). Positions 99-162 (RIAPPATDEA…ERPRNTDSAT (64 aa)) are disordered. The segment covering 113–127 (VPPSENPATTSPDTT) has biased composition (polar residues). A domain II region spans residues 113–166 (VPPSENPATTSPDTTTDNDEIDDSAAARGDNQHSWPSYFTERPRNTDSATAGVT). The segment at 167–383 (SLNRRYTFDT…GALIRVTAFA (217 aa)) is domain III, AAA+ region. Positions 211, 213, 214, and 215 each coordinate ATP. The interval 384-507 (SLNKTPIDKA…TTRIRQRSKR (124 aa)) is domain IV, binds dsDNA.

The protein belongs to the DnaA family. In terms of assembly, oligomerizes as a right-handed, spiral filament on DNA at oriC.

The protein resides in the cytoplasm. Its function is as follows. Plays an essential role in the initiation and regulation of chromosomal replication. ATP-DnaA binds to the origin of replication (oriC) to initiate formation of the DNA replication initiation complex once per cell cycle. Binds the DnaA box (a 9 base pair repeat at the origin) and separates the double-stranded (ds)DNA. Forms a right-handed helical filament on oriC DNA; dsDNA binds to the exterior of the filament while single-stranded (ss)DNA is stabiized in the filament's interior. The ATP-DnaA-oriC complex binds and stabilizes one strand of the AT-rich DNA unwinding element (DUE), permitting loading of DNA polymerase. After initiation quickly degrades to an ADP-DnaA complex that is not apt for DNA replication. Binds acidic phospholipids. The chain is Chromosomal replication initiator protein DnaA from Mycobacterium bovis (strain ATCC BAA-935 / AF2122/97).